A 144-amino-acid polypeptide reads, in one-letter code: D-aminoacyl-tRNA deacylase (144 aa).

The Gly-cisPro motif, important for rejection of L-amino acids motif lies at 136-137; sequence GP.

This sequence belongs to the DTD family. Homodimer.

Its subcellular location is the cytoplasm. It carries out the reaction glycyl-tRNA(Ala) + H2O = tRNA(Ala) + glycine + H(+). The catalysed reaction is a D-aminoacyl-tRNA + H2O = a tRNA + a D-alpha-amino acid + H(+). In terms of biological role, an aminoacyl-tRNA editing enzyme that deacylates mischarged D-aminoacyl-tRNAs. Also deacylates mischarged glycyl-tRNA(Ala), protecting cells against glycine mischarging by AlaRS. Acts via tRNA-based rather than protein-based catalysis; rejects L-amino acids rather than detecting D-amino acids in the active site. By recycling D-aminoacyl-tRNA to D-amino acids and free tRNA molecules, this enzyme counteracts the toxicity associated with the formation of D-aminoacyl-tRNA entities in vivo and helps enforce protein L-homochirality. The chain is D-aminoacyl-tRNA deacylase from Vibrio atlanticus (strain LGP32) (Vibrio splendidus (strain Mel32)).